A 595-amino-acid polypeptide reads, in one-letter code: Peptidyl-prolyl cis-trans isomerase CYP65 (595 aa).

Positions 35–108 (KSLPYYCCAL…GEYHCPVLNK (74 aa)) constitute a U-box domain. The PPIase cyclophilin-type domain maps to 342–496 (KKGYVQFQTT…EEIKIIEASV (155 aa)). Disordered stretches follow at residues 503–546 (ELDE…GGGG) and 576–595 (SKKRKTTASASTGFKDFSSW). A compositionally biased stretch (basic and acidic residues) spans 510-525 (KEKAEKEKNEDKDIEK). A compositionally biased stretch (polar residues) spans 582–595 (TASASTGFKDFSSW).

This sequence belongs to the cyclophilin-type PPIase family. PPIL2 subfamily. In terms of tissue distribution, expressed in leaves, flower buds and stems. Lower levels of expression in roots.

Its subcellular location is the nucleus. It catalyses the reaction [protein]-peptidylproline (omega=180) = [protein]-peptidylproline (omega=0). The enzyme catalyses S-ubiquitinyl-[E2 ubiquitin-conjugating enzyme]-L-cysteine + [acceptor protein]-L-lysine = [E2 ubiquitin-conjugating enzyme]-L-cysteine + N(6)-ubiquitinyl-[acceptor protein]-L-lysine.. It participates in protein modification; protein ubiquitination. In terms of biological role, may catalyze the cis-trans isomerization of proline imidic peptide bonds in oligopeptides thereby assisting the folding of proteins. May also function as a chaperone, playing a role in intracellular transport of proteins. May also have a protein ubiquitin ligase activity acting as an E3 ubiquitin protein ligase or as a ubiquitin-ubiquitin ligase promoting elongation of ubiquitin chains on proteins. The polypeptide is Peptidyl-prolyl cis-trans isomerase CYP65 (CYP65) (Arabidopsis thaliana (Mouse-ear cress)).